The following is a 118-amino-acid chain: Beta-2-microglobulin (118 aa).

Positions 1–20 (MARFVALVLLGLLSLSGLDA) are cleaved as a signal peptide. The Ig-like C1-type domain maps to 25–112 (PKIQVYSRHP…HVTLEQPRIV (88 aa)). Cysteine 45 and cysteine 99 are joined by a disulfide.

This sequence belongs to the beta-2-microglobulin family. Heterodimer of an alpha chain and a beta chain. Beta-2-microglobulin is the beta-chain of major histocompatibility complex class I molecules. Forms a heterotrimer with MR1 and a metabolite antigen.

It localises to the secreted. Component of the class I major histocompatibility complex (MHC). Involved in the presentation of peptide antigens to the immune system. The chain is Beta-2-microglobulin (B2M) from Bos taurus (Bovine).